Here is a 151-residue protein sequence, read N- to C-terminus: Deoxyuridine 5'-triphosphate nucleotidohydrolase (151 aa).

Substrate-binding positions include 70–72, Asn83, 87–89, and Met97; these read RSG and LID.

Belongs to the dUTPase family. Mg(2+) serves as cofactor.

It carries out the reaction dUTP + H2O = dUMP + diphosphate + H(+). The protein operates within pyrimidine metabolism; dUMP biosynthesis; dUMP from dCTP (dUTP route): step 2/2. This enzyme is involved in nucleotide metabolism: it produces dUMP, the immediate precursor of thymidine nucleotides and it decreases the intracellular concentration of dUTP so that uracil cannot be incorporated into DNA. The chain is Deoxyuridine 5'-triphosphate nucleotidohydrolase from Pseudomonas entomophila (strain L48).